The primary structure comprises 64 residues: MAGHKIAHATLKGPSVVKELVIGLTLGLAAGGLWKMHHWNEQRKTRVFYDLLERGEIGVVVTEE.

The chain crosses the membrane as a helical span at residues 15–34 (SVVKELVIGLTLGLAAGGLW).

This sequence belongs to the cytochrome c oxidase subunit 5C family.

It localises to the mitochondrion inner membrane. Functionally, this protein is one of the nuclear-coded polypeptide chains of cytochrome c oxidase, the terminal oxidase in mitochondrial electron transport. This chain is Probable cytochrome c oxidase subunit 5C-3, found in Arabidopsis thaliana (Mouse-ear cress).